The chain runs to 337 residues: Inositol 2-dehydrogenase (337 aa).

Belongs to the Gfo/Idh/MocA family. As to quaternary structure, homotetramer.

It catalyses the reaction myo-inositol + NAD(+) = scyllo-inosose + NADH + H(+). In terms of biological role, involved in the oxidation of myo-inositol (MI) to 2-keto-myo-inositol (2KMI or 2-inosose). This Corynebacterium glutamicum (strain ATCC 13032 / DSM 20300 / JCM 1318 / BCRC 11384 / CCUG 27702 / LMG 3730 / NBRC 12168 / NCIMB 10025 / NRRL B-2784 / 534) protein is Inositol 2-dehydrogenase.